We begin with the raw amino-acid sequence, 321 residues long: Small ribosomal subunit biogenesis GTPase RsgA (321 aa).

One can recognise a CP-type G domain in the interval 89–248 (QSWINRPPVA…VADTPGFNRP (160 aa)). Residues 138-141 (TKRD) and 190-198 (GPSGVGKTS) contribute to the GTP site. C273, C278, H280, and C286 together coordinate Zn(2+).

It belongs to the TRAFAC class YlqF/YawG GTPase family. RsgA subfamily. Monomer. Associates with 30S ribosomal subunit, binds 16S rRNA. It depends on Zn(2+) as a cofactor.

The protein resides in the cytoplasm. One of several proteins that assist in the late maturation steps of the functional core of the 30S ribosomal subunit. Helps release RbfA from mature subunits. May play a role in the assembly of ribosomal proteins into the subunit. Circularly permuted GTPase that catalyzes slow GTP hydrolysis, GTPase activity is stimulated by the 30S ribosomal subunit. The sequence is that of Small ribosomal subunit biogenesis GTPase RsgA from Prochlorococcus marinus (strain MIT 9303).